The chain runs to 299 residues: AT-hook motif nuclear-localized protein 25 (299 aa).

Disordered stretches follow at residues 1–87 (MSSY…RDSP) and 216–251 (EEET…CESN). Composition is skewed to basic and acidic residues over residues 14–23 (HLQRPEDSRT) and 33–42 (NRSEADEAKA). Composition is skewed to low complexity over residues 44-72 (TTPT…PAGS) and 224-239 (TTGV…QSSE). Residues 63-75 (RRPRGRPAGSKNK) constitute a DNA-binding region (a.T hook). A PPC domain is found at 87–233 (PNVLRSHVLE…TTGVQQQQPE (147 aa)). The span at 240-251 (VTGSGAQACESN) shows a compositional bias: polar residues.

Homodimer. Interacts with AHL27 and AHL29. As to expression, expressed in seedlings, leaves, stems, floral tips and flowers.

It is found in the nucleus. Its function is as follows. Transcription factor that specifically binds AT-rich DNA sequences related to the nuclear matrix attachment regions (MARs). Binds the DNA sequence GNFEI (GA-negative feedback element I) in the GA3OX1 promoter. Binding to GNFEI sequence is required for GA-negative feedback regulation of GA3OX1. In Arabidopsis thaliana (Mouse-ear cress), this protein is AT-hook motif nuclear-localized protein 25.